A 159-amino-acid chain; its full sequence is Phosphopantetheine adenylyltransferase (159 aa).

A substrate-binding site is contributed by Thr10. ATP is bound by residues 10–11 (TF) and His18. Substrate is bound by residues Lys42, Met74, and Arg88. ATP contacts are provided by residues 89–91 (GLR), Glu99, and 124–130 (WSFISSS).

It belongs to the bacterial CoaD family. As to quaternary structure, homohexamer. The cofactor is Mg(2+).

The protein resides in the cytoplasm. It carries out the reaction (R)-4'-phosphopantetheine + ATP + H(+) = 3'-dephospho-CoA + diphosphate. Its pathway is cofactor biosynthesis; coenzyme A biosynthesis; CoA from (R)-pantothenate: step 4/5. Reversibly transfers an adenylyl group from ATP to 4'-phosphopantetheine, yielding dephospho-CoA (dPCoA) and pyrophosphate. In Salmonella paratyphi A (strain ATCC 9150 / SARB42), this protein is Phosphopantetheine adenylyltransferase.